We begin with the raw amino-acid sequence, 341 residues long: MSKRISLTQFLVEQQRQHGRIPAQLRLLIEVVARACKRIAISVNKGALGEVLGSAGSENVQGEVQKKLDIISNEVLIEANEWGGHLAAMASEEMDSIHVVPNRYPQGEYMLLFDPLDGSSNIDVNVSIGTIFSVLRKVGHQHGVSEEDFLQPGKFQAAAGYCVYGPQTTLVLTVGDGVAVFTLDRETGSFVLTQSNLQIPADTHEFAINASNHRHWAPPMKRYIDECLAGREGPRGKDFNMRWVGSMVADVHRILTRGGIFLYPWDQREPDKPGKLRLMYEANPMAFLVEQAGGAATNGEQRIMDLMPGKLHERVSVMMGSKNEVERVSQYHREHREAAGH.

Mg(2+)-binding residues include E92, D114, L116, and D117. Residues 117 to 120 (DGSS), N209, and K275 contribute to the substrate site. E281 serves as a coordination point for Mg(2+).

Belongs to the FBPase class 1 family. As to quaternary structure, homotetramer. The cofactor is Mg(2+).

The protein localises to the cytoplasm. The enzyme catalyses beta-D-fructose 1,6-bisphosphate + H2O = beta-D-fructose 6-phosphate + phosphate. It functions in the pathway carbohydrate biosynthesis; gluconeogenesis. The chain is Fructose-1,6-bisphosphatase class 1 1 from Leptothrix cholodnii (strain ATCC 51168 / LMG 8142 / SP-6) (Leptothrix discophora (strain SP-6)).